The following is a 373-amino-acid chain: MKAKNVNLLFAFVAVLLFGFSCFCISRMNQTNNQLINCRNHVLEFKEIMLRLKNKSENHHQDLMQVLYQMKRKAAHTTRSSGNFLEKKGSILSQHETLPNQFEVLKYFLPHLRTAGKLYPAIATSKGRAGVSFALGISTINRGNHTYLKQTLTSVLSRMTPEEEEDSVVIVSVADTDESYLKSVVRMVKTKFRKQVQSGVLEVISIPTLFYPQTLLDKKTKTDSESWQIKQVLDFCILMLYAQPKATYYLQLEDDIVAKKMYFTKMKDFVNSLTSKNWFFIEFSVLGFIGKLFRSKDLTDFVHFFLMFYETKPIDILLDDIFLIRVCISGEPVRSCLQRKKGFRIQYRPSLFQHVGTQSSFPGREQHLKDNYY.

Residues 1-5 (MKAKN) lie on the Cytoplasmic side of the membrane. The chain crosses the membrane as a helical; Signal-anchor for type II membrane protein span at residues 6–26 (VNLLFAFVAVLLFGFSCFCIS). Residues 27–373 (RMNQTNNQLI…REQHLKDNYY (347 aa)) lie on the Lumenal side of the membrane. N-linked (GlcNAc...) asparagine glycosylation is found at asparagine 29, asparagine 54, and asparagine 144.

Belongs to the glycosyltransferase 54 family. In terms of assembly, isoform 2 self-associates; specifically in the endoplasmic reticulum prior to its translocation to the Golgi. Isoform 1 and isoform 2 interact with MGAT1, MGAT3 and MAN2A2; isoform 2 interacts specifically with MGAT1 in the Golgi. Post-translationally, isoform 2 is N-glycosylated; consisting of high-mannose and/or hybrid glycans. Isoform 1 and isoform 2 are specifically expressed in testis. Isoform 2 is expressed in spermatocytes but not in spermatids. Isoform 1 is expressed in spermatids.

The protein resides in the endoplasmic reticulum membrane. The protein localises to the endoplasmic reticulum-Golgi intermediate compartment membrane. Its subcellular location is the golgi apparatus membrane. In terms of biological role, may play a role in male spermatogenesis. In vitro acts as inhibitor of MGAT1 activity causing cell surface proteins to carry mainly high mannose N-glycans. The function is mediated by its lumenal domain and occurs specifically in the Golgi. A catalytic glucosyltransferase activity is not detected. May be involved in regulation of Sertoli-germ cell interactions during specific stages of spermatogenesis. This is Alpha-1,3-mannosyl-glycoprotein 4-beta-N-acetylglucosaminyltransferase-like protein MGAT4D from Mus musculus (Mouse).